Reading from the N-terminus, the 37-residue chain is Mating pheromone Er-20 (37 aa).

Intrachain disulfides connect Cys-3–Cys-18, Cys-10–Cys-32, and Cys-15–Cys-24.

In terms of assembly, homodimer.

The protein resides in the secreted. Its function is as follows. Mating ciliate pheromones (or gamones) are diffusible extracellular communication signals that distinguish different intraspecific classes of cells commonly referred to as 'mating types'. They prepare the latter for conjugation by changing their cell surface properties. This chain is Mating pheromone Er-20 (MAT20), found in Euplotes raikovi.